A 316-amino-acid chain; its full sequence is Protoheme IX farnesyltransferase (316 aa).

A run of 9 helical transmembrane segments spans residues 32–52, 53–73, 98–118, 120–140, 153–173, 180–200, 226–246, 251–271, and 280–300; these read VMSL…THVN, PIIG…SGAL, VARE…VITL, FVAN…YVVI, IVIG…AVAG, LALF…LALV, ILLY…IGFA, GLLS…VYLA, and VAMR…AAIV.

This sequence belongs to the UbiA prenyltransferase family. Protoheme IX farnesyltransferase subfamily.

The protein resides in the cell inner membrane. The catalysed reaction is heme b + (2E,6E)-farnesyl diphosphate + H2O = Fe(II)-heme o + diphosphate. Its pathway is porphyrin-containing compound metabolism; heme O biosynthesis; heme O from protoheme: step 1/1. In terms of biological role, converts heme B (protoheme IX) to heme O by substitution of the vinyl group on carbon 2 of heme B porphyrin ring with a hydroxyethyl farnesyl side group. The polypeptide is Protoheme IX farnesyltransferase (Methylocella silvestris (strain DSM 15510 / CIP 108128 / LMG 27833 / NCIMB 13906 / BL2)).